The primary structure comprises 550 residues: Carboxypeptidase Y homolog A (550 aa).

An N-terminal signal peptide occupies residues 1–18 (MKSLVLGLLVGSAIASGP). Residues 19-131 (LQHVLHAPPD…KLSQYDLRIK (113 aa)) constitute a propeptide that is removed on maturation. The interval 20–39 (QHVLHAPPDPEPKPEPEPQV) is disordered. 5 disulfides stabilise this stretch: C185/C424, C319/C333, C343/C366, C350/C359, and C388/C394. 2 N-linked (GlcNAc...) asparagine glycosylation sites follow: N203 and N216. S272 is a catalytic residue. The N-linked (GlcNAc...) asparagine glycan is linked to N289. N387 is a glycosylation site (N-linked (GlcNAc...) asparagine). Residue D463 is part of the active site. N-linked (GlcNAc...) asparagine glycans are attached at residues N493 and N514. The active site involves H525.

It belongs to the peptidase S10 family.

The protein localises to the vacuole. The enzyme catalyses Release of a C-terminal amino acid with broad specificity.. In terms of biological role, vacuolar carboxypeptidase involved in degradation of small peptides. Digests preferentially peptides containing an aliphatic or hydrophobic residue in P1' position, as well as methionine, leucine or phenylalanine in P1 position of ester substrate. In Paracoccidioides brasiliensis (strain Pb18), this protein is Carboxypeptidase Y homolog A (CPYA).